Consider the following 608-residue polypeptide: Phosphomethylpyrimidine synthase (608 aa).

Substrate-binding positions include Asn-216, Met-245, Tyr-274, His-310, 330 to 332 (SRG), 371 to 374 (DGLR), and Glu-410. Position 414 (His-414) interacts with Zn(2+). A substrate-binding site is contributed by Tyr-437. Zn(2+) is bound at residue His-478. [4Fe-4S] cluster-binding residues include Cys-558, Cys-561, and Cys-566.

The protein belongs to the ThiC family. In terms of assembly, homodimer. Requires [4Fe-4S] cluster as cofactor.

It carries out the reaction 5-amino-1-(5-phospho-beta-D-ribosyl)imidazole + S-adenosyl-L-methionine = 4-amino-2-methyl-5-(phosphooxymethyl)pyrimidine + CO + 5'-deoxyadenosine + formate + L-methionine + 3 H(+). The protein operates within cofactor biosynthesis; thiamine diphosphate biosynthesis. In terms of biological role, catalyzes the synthesis of the hydroxymethylpyrimidine phosphate (HMP-P) moiety of thiamine from aminoimidazole ribotide (AIR) in a radical S-adenosyl-L-methionine (SAM)-dependent reaction. This is Phosphomethylpyrimidine synthase from Ruegeria sp. (strain TM1040) (Silicibacter sp.).